Here is a 256-residue protein sequence, read N- to C-terminus: MMHLYWVALKSIWAKEIHRFMRIWVQTLVPPVITMTLYFIIFGNLIGSRIGDMHGFSYMQFIVPGLIMMSVITNAYANVASSFFGAKFQRNIEELLVAPVPTHVIIAGYVGGGVARGLFVGILVTAISLFFVPFQVHSWVFVALTLVLTAVLFSLAGLLNGVFAKTFDDISLVPTFVLTPLTYLGGVFYSLTLLPPFWQGLSHLNPIVYMISGFRYGFLGINDVPLVTTFGVLVVFIVAFYLICWSLIQRGRGLRS.

Over 1-22 (MMHLYWVALKSIWAKEIHRFMR) the chain is Periplasmic. The 230-residue stretch at 22–251 (RIWVQTLVPP…LICWSLIQRG (230 aa)) folds into the ABC transmembrane type-2 domain. Residues 23-43 (IWVQTLVPPVITMTLYFIIFG) form a helical membrane-spanning segment. The Cytoplasmic segment spans residues 44–52 (NLIGSRIGD). The chain crosses the membrane as a helical span at residues 53–73 (MHGFSYMQFIVPGLIMMSVIT). Topologically, residues 74–94 (NAYANVASSFFGAKFQRNIEE) are periplasmic. The helical transmembrane segment at 95-115 (LLVAPVPTHVIIAGYVGGGVA) threads the bilayer. Arg-116 is a topological domain (cytoplasmic). A helical membrane pass occupies residues 117 to 137 (GLFVGILVTAISLFFVPFQVH). Residue Ser-138 is a topological domain, periplasmic. A helical transmembrane segment spans residues 139–159 (WVFVALTLVLTAVLFSLAGLL). Residues 160–169 (NGVFAKTFDD) lie on the Cytoplasmic side of the membrane. The chain crosses the membrane as a helical span at residues 170-190 (ISLVPTFVLTPLTYLGGVFYS). The Periplasmic segment spans residues 191-223 (LTLLPPFWQGLSHLNPIVYMISGFRYGFLGIND). The helical transmembrane segment at 224–244 (VPLVTTFGVLVVFIVAFYLIC) threads the bilayer. Residues 245-256 (WSLIQRGRGLRS) are Cytoplasmic-facing.

It belongs to the ABC-2 integral membrane protein family.

It localises to the cell inner membrane. In Escherichia coli O157:H7, this protein is Inner membrane transport permease YadH (yadH).